Here is a 345-residue protein sequence, read N- to C-terminus: NADH-quinone oxidoreductase subunit H (345 aa).

At 1 to 15 (MADFWATSLGQTLIL) the chain is on the lumenal side. A helical membrane pass occupies residues 16–35 (LAQGLGIIAFVMIGLLLLVW). Residues 36–86 (GDRKIWAAVQMRKGPNVVGAFGLLQSVADAAKYVFKEIVVPAGVDKPVYFL) lie on the Cytoplasmic side of the membrane. A helical membrane pass occupies residues 87-106 (APMLSLVLALLAWVVVPFNE). At 107–110 (GWVM) the chain is on the lumenal side. A helical transmembrane segment spans residues 111 to 130 (ADINVAVLFVFAVSSLEVYG). Over 131–156 (VIMGGWASNSKYPFLGSLRSAAQMIS) the chain is Cytoplasmic. Residues 157–176 (YEVSMGLIIVGVIISTGSMN) traverse the membrane as a helical segment. Topologically, residues 177–191 (LSAIVEAQRGDFGLL) are lumenal. The chain crosses the membrane as a helical span at residues 192–211 (NWYWLPHLPMVALFFISALA). Residues 212 to 245 (ETNRPPFDLPEAESELVAGFMVEYSSTPYLLFMA) are Cytoplasmic-facing. The helical transmembrane segment at 246 to 265 (GEYIAVWLMCALTSVLFFGG) threads the bilayer. At 266 to 276 (WLSPIPGVPDG) the chain is on the lumenal side. The helical transmembrane segment at 277–296 (VLWMVAKMAAVFFVFAMVKA) threads the bilayer. Residues 297 to 313 (IVPRYRYDQLMRIGWKV) are Cytoplasmic-facing. The helical transmembrane segment at 314 to 333 (FLPLSLAWVVVVAFLAKFEV) threads the bilayer. The Lumenal portion of the chain corresponds to 334–345 (LGGFWARWSIGA).

It belongs to the complex I subunit 1 family. As to quaternary structure, NDH-1 is composed of 14 different subunits. Subunits NuoA, H, J, K, L, M, N constitute the membrane sector of the complex.

Its subcellular location is the cellular chromatophore membrane. The enzyme catalyses a quinone + NADH + 5 H(+)(in) = a quinol + NAD(+) + 4 H(+)(out). In terms of biological role, NDH-1 shuttles electrons from NADH, via FMN and iron-sulfur (Fe-S) centers, to quinones in the respiratory chain. The immediate electron acceptor for the enzyme in this species is believed to be ubiquinone. Couples the redox reaction to proton translocation (for every two electrons transferred, four hydrogen ions are translocated across the cytoplasmic membrane), and thus conserves the redox energy in a proton gradient. This subunit may bind ubiquinone. In Rhodobacter capsulatus (Rhodopseudomonas capsulata), this protein is NADH-quinone oxidoreductase subunit H.